Here is a 250-residue protein sequence, read N- to C-terminus: MQLVKYSASGNDFVIYHTFVKKDRSELAKLLCHRHEGIGADGLIVLLPHSRYDFEWQFYNADGSEAEMCGNGSRAAAHYAYSYGLASKQMRFLTLAGVIEASVEADVVESQLTKPKILDRKIEENGKRWWLIDTGVPHLVTFVEDLNQFDKNESKRLRNKYNANVNYGIIRDLENVGVRTYERGVEDETLACGTGMAATFLRAFEEGVVNPTVTVVPKSGEELQLRYENEKLFFKGRVKKVFETFKEGIW.

The substrate site is built by asparagine 11 and asparagine 60. Catalysis depends on cysteine 69, which acts as the Proton donor. Substrate contacts are provided by residues 70–71, asparagine 164, and 182–183; these read GN and ER. The Proton acceptor role is filled by cysteine 192. 193–194 lines the substrate pocket; sequence GT.

It belongs to the diaminopimelate epimerase family. Homodimer.

It is found in the cytoplasm. It catalyses the reaction (2S,6S)-2,6-diaminopimelate = meso-2,6-diaminopimelate. Its pathway is amino-acid biosynthesis; L-lysine biosynthesis via DAP pathway; DL-2,6-diaminopimelate from LL-2,6-diaminopimelate: step 1/1. Functionally, catalyzes the stereoinversion of LL-2,6-diaminopimelate (L,L-DAP) to meso-diaminopimelate (meso-DAP), a precursor of L-lysine and an essential component of the bacterial peptidoglycan. This chain is Diaminopimelate epimerase, found in Nitratiruptor sp. (strain SB155-2).